The chain runs to 502 residues: Lysine--tRNA ligase (502 aa).

Mg(2+) contacts are provided by Glu-412 and Glu-419.

The protein belongs to the class-II aminoacyl-tRNA synthetase family. As to quaternary structure, homodimer. Mg(2+) is required as a cofactor.

It is found in the cytoplasm. It carries out the reaction tRNA(Lys) + L-lysine + ATP = L-lysyl-tRNA(Lys) + AMP + diphosphate. The chain is Lysine--tRNA ligase from Histophilus somni (strain 2336) (Haemophilus somnus).